The chain runs to 95 residues: Heteroscorpine-1 (95 aa).

The signal sequence occupies residues 1 to 19; the sequence is MNSKLTALIFLGLVAIASC. Residues 55-95 form the BetaSPN-type CS-alpha/beta domain; that stretch reads EFQCVANIDTMGNCETHCQKTSGEKGFCHGTKCKCGKPLSY. Cystine bridges form between Cys-58–Cys-82, Cys-68–Cys-87, and Cys-72–Cys-89.

This sequence belongs to the long chain scorpion toxin family. Class 3 subfamily. Contains 3 disulfide bonds. In terms of tissue distribution, expressed by the venom gland.

It is found in the secreted. Its function is as follows. Has antibacterial activity against B.subtilis, K.pneumoniae and P.aeruginosa. This chain is Heteroscorpine-1, found in Heterometrus laoticus (Thai giant scorpion).